We begin with the raw amino-acid sequence, 230 residues long: Cell division ATP-binding protein FtsE (230 aa).

In terms of domain architecture, ABC transporter spans 4 to 229 (IEMRDVVKKY…DESKGEYGYD (226 aa)). 37-44 (GPSGAGKS) is a binding site for ATP.

The protein belongs to the ABC transporter superfamily. As to quaternary structure, homodimer. Interacts with FtsX; forms a membrane-associated complex. Interacts with pcsB.

It is found in the cell membrane. The catalysed reaction is ATP + H2O = ADP + phosphate + H(+). Functionally, part of the ABC transporter FtsEX involved in cellular division. Has ATPase activity. Essential for cell division and viability. The sequence is that of Cell division ATP-binding protein FtsE from Streptococcus pneumoniae serotype 2 (strain D39 / NCTC 7466).